Reading from the N-terminus, the 642-residue chain is 4-hydroxy-3-methylbut-2-enyl diphosphate reductase (642 aa).

The tract at residues 1-282 (MRKVMLAEKA…EEAISKMSEN (282 aa)) is 4-hydroxy-3-methylbut-2-enyl diphosphate reductase. A [4Fe-4S] cluster-binding site is contributed by Cys-13. (2E)-4-hydroxy-3-methylbut-2-enyl diphosphate-binding residues include His-42 and His-77. Dimethylallyl diphosphate-binding residues include His-42 and His-77. Isopentenyl diphosphate is bound by residues His-42 and His-77. Position 99 (Cys-99) interacts with [4Fe-4S] cluster. His-127 is a binding site for (2E)-4-hydroxy-3-methylbut-2-enyl diphosphate. His-127 provides a ligand contact to dimethylallyl diphosphate. His-127 serves as a coordination point for isopentenyl diphosphate. The active-site Proton donor is the Glu-129. Thr-165 is a binding site for (2E)-4-hydroxy-3-methylbut-2-enyl diphosphate. Residue Cys-193 participates in [4Fe-4S] cluster binding. Ser-221, Ser-222, Asn-223, and Ser-266 together coordinate (2E)-4-hydroxy-3-methylbut-2-enyl diphosphate. Dimethylallyl diphosphate-binding residues include Ser-221, Ser-222, Asn-223, and Ser-266. Isopentenyl diphosphate-binding residues include Ser-221, Ser-222, Asn-223, and Ser-266. S1 motif domains are found at residues 309-377 (GASV…LSVK), 484-552 (GQVV…LSVK), and 569-638 (GSVV…LSIR).

This sequence in the N-terminal section; belongs to the IspH family. [4Fe-4S] cluster serves as cofactor.

The catalysed reaction is isopentenyl diphosphate + 2 oxidized [2Fe-2S]-[ferredoxin] + H2O = (2E)-4-hydroxy-3-methylbut-2-enyl diphosphate + 2 reduced [2Fe-2S]-[ferredoxin] + 2 H(+). The enzyme catalyses dimethylallyl diphosphate + 2 oxidized [2Fe-2S]-[ferredoxin] + H2O = (2E)-4-hydroxy-3-methylbut-2-enyl diphosphate + 2 reduced [2Fe-2S]-[ferredoxin] + 2 H(+). Its pathway is isoprenoid biosynthesis; dimethylallyl diphosphate biosynthesis; dimethylallyl diphosphate from (2E)-4-hydroxy-3-methylbutenyl diphosphate: step 1/1. It participates in isoprenoid biosynthesis; isopentenyl diphosphate biosynthesis via DXP pathway; isopentenyl diphosphate from 1-deoxy-D-xylulose 5-phosphate: step 6/6. Catalyzes the conversion of 1-hydroxy-2-methyl-2-(E)-butenyl 4-diphosphate (HMBPP) into a mixture of isopentenyl diphosphate (IPP) and dimethylallyl diphosphate (DMAPP). Acts in the terminal step of the DOXP/MEP pathway for isoprenoid precursor biosynthesis. This Clostridium acetobutylicum (strain ATCC 824 / DSM 792 / JCM 1419 / IAM 19013 / LMG 5710 / NBRC 13948 / NRRL B-527 / VKM B-1787 / 2291 / W) protein is 4-hydroxy-3-methylbut-2-enyl diphosphate reductase.